The chain runs to 309 residues: Zinc transporter ZIP2 (309 aa).

Residues 1–8 (MEQLLGIK) lie on the Extracellular side of the membrane. Residues 9–29 (LGCLFALLALTLGCGLTPICF) form a helical membrane-spanning segment. The Cytoplasmic portion of the chain corresponds to 30-46 (KWFQIDAARGHHRLVLR). A helical membrane pass occupies residues 47–67 (LLGCISAGVFLGAGFMHMTAE). Residues 68-103 (ALEEIESQIQKFMVQNRSASERNSSGDADSAHMEYP) lie on the Extracellular side of the membrane. The chain crosses the membrane as a helical span at residues 104-124 (YGELIISLGFFFVFFLESLAL). The Cytoplasmic segment spans residues 125–164 (QCCPGAAGGSTVQDEEWGGAHIFELHSHGHLPSPSKGPLR). The helical transmembrane segment at 165 to 185 (ALVLLLSLSFHSVFEGLAVGL) threads the bilayer. 2 residues coordinate Zn(2+): His175 and Glu179. The Extracellular segment spans residues 186 to 189 (QPTV). Residues 190–210 (AATVQLCLAVLAHKGLVVFGV) traverse the membrane as a helical segment. His202 is a binding site for Zn(2+). Residues 211-224 (GMRLVHLGTSSRWA) are Cytoplasmic-facing. A helical membrane pass occupies residues 225–245 (VFSILLLALMSPLGLAVGLAV). At 246 to 258 (TGGDSEGGRGLAQ) the chain is on the extracellular side. The helical transmembrane segment at 259–279 (AVLEGVAAGTFLYVTFLEILP) threads the bilayer. Glu276 contributes to the Zn(2+) binding site. Topologically, residues 280-288 (RELASPEAP) are cytoplasmic. The chain crosses the membrane as a helical span at residues 289 to 309 (LAKWSCVAAGFAFMAFIALWA).

Belongs to the ZIP transporter (TC 2.A.5) family. Expressed only in prostate and uterine epithelial cells.

The protein resides in the cell membrane. It catalyses the reaction Zn(2+)(in) = Zn(2+)(out). The catalysed reaction is Cd(2+)(in) = Cd(2+)(out). With respect to regulation, activity is increased at acidic pH (6.5). Inhibited in the presence of high extracellular K(+). Functionally, transporter for the divalent cation Zn(2+). Mediates the influx of Zn(2+) into cells from extracellular space. The Zn(2+) uniporter activity is independent of H(+)-driving force, but is modulated by extracellular pH and membrane potential. Also transports other divalent cations Zn(2+), Cd2(+), Cu2(+), Co2(+) in the order of decreasing affinity, respectively. In the skin, aids in the differentiation of keratinocytes in the epidermis. The protein is Zinc transporter ZIP2 of Homo sapiens (Human).